Here is a 283-residue protein sequence, read N- to C-terminus: MKVLNELRQFYPLDELLRAAEIPRSTFYYHLKALSKPDKYADVKKRISEIYHENRGRYGYRRVTLSLHREGKQINHKAVQRLMGTLSLKAAIKVKRYRSYRGEVGQTAPNVLQRDFKATRPNEKWVTDVTEFAVNGRKLYLSPVIDLFNNEVISYSLSERPVMNMVENMLDQAFKKLNPHEHPVLHSDQGWQYRMRRYQNILKEHGIKQSMSRKGNCLDNAVVECFFGTLKSECFYLDEFSNISELKDAVTEYIEYYNSRRISLKLKGLTPIEYRNQTYMPRV.

The Integrase catalytic domain occupies 117-279 (KATRPNEKWV…TPIEYRNQTY (163 aa)).

It belongs to the transposase IS3/IS150/IS904 family.

Its function is as follows. Involved in the transposition of the insertion sequence IS150. This is Putative transposase InsK for insertion sequence element IS150 (insK) from Escherichia coli (strain K12).